The primary structure comprises 510 residues: Beta-glucosidase 34 (510 aa).

A signal peptide spans 1 to 26 (MGNGGRCMVEVVILLVLMAMSQGCDA). An N-linked (GlcNAc...) asparagine glycan is attached at Asn-28. Residue Gln-52 coordinates a beta-D-glucoside. Asn-120 is a glycosylation site (N-linked (GlcNAc...) asparagine). Residues His-153 and 198–199 (NE) each bind a beta-D-glucoside. Catalysis depends on Glu-199, which acts as the Proton donor. Cysteines 218 and 226 form a disulfide. Asn-279 and Asn-331 each carry an N-linked (GlcNAc...) asparagine glycan. Tyr-342 lines the a beta-D-glucoside pocket. N-linked (GlcNAc...) asparagine glycosylation is present at Asn-360. A beta-D-glucoside is bound by residues Glu-415, Trp-465, 472-473 (EW), and Phe-481. The active-site Nucleophile is the Glu-415.

Belongs to the glycosyl hydrolase 1 family.

The enzyme catalyses Hydrolysis of terminal, non-reducing beta-D-glucosyl residues with release of beta-D-glucose.. The polypeptide is Beta-glucosidase 34 (BGLU34) (Oryza sativa subsp. japonica (Rice)).